The chain runs to 621 residues: MKLITILFLCSRLLPSLTQESSQEIDCNDQDVFKAVDAALTKYNSENKSGNQFVLYRITEVARMDNPDTFYSLKYQIKEGDCPFQSNKTWQDCDYKDSAQAATGECTATVAKRGNMKFSVAIQTCLITPAEGPVVTAQYECLGCVHPISTKSPDLEPVLRYAIQYFNNNTSHSHLFDLKEVKRAQRQVVSGWNYEVNYSIAQTNCSKEEFSFLTPDCKSLSSGDTGECTDKAHVDVKLRISSFSQKCDLYPVKDFVQPPTRLCAGCPKPIPVDSPDLEEPLSHSIAKLNAEHDGAFYFKIDTVKKATVQVVAGLKYSIVFIARETTCSKGSNEELTKSCEINIHGQILHCDANVYVVPWEEKVYPTVNCQPLGQTSLMKRPPGFSPFRSVQVMKTEGSTTVSLPHSAMSPVQDEERDSGKEQGPTHGHGWDHGKQIKLHGLGLGHKHKHDQGHGHHGSHGLGHGHQKQHGLGHGHKHGHGHGKHKNKGKNNGKHYDWRTPYLASSYEDSTTSSAQTQEKTEETTLSSLAQPGVAITFPDFQDSDLIATVMPNTLPPHTESDDDWIPDIQTEPNSLAFKLISDFPETTSPKCPSRPWKPVNGVNPTVEMKESHDFDLVDALL.

An N-terminal signal peptide occupies residues 1–18 (MKLITILFLCSRLLPSLT). The 105-residue stretch at 27–131 (CNDQDVFKAV…IQTCLITPAE (105 aa)) folds into the Cystatin kininogen-type 1 domain. Cystine bridges form between cysteine 27–cysteine 591, cysteine 82–cysteine 93, cysteine 106–cysteine 125, cysteine 141–cysteine 144, cysteine 205–cysteine 217, cysteine 228–cysteine 247, cysteine 263–cysteine 266, cysteine 327–cysteine 339, and cysteine 350–cysteine 369. N-linked (GlcNAc...) asparagine glycans are attached at residues asparagine 47 and asparagine 87. Threonine 136 carries O-linked (GalNAc...) threonine; partial glycosylation. Residues 150-253 (TKSPDLEPVL…SQKCDLYPVK (104 aa)) enclose the Cystatin kininogen-type 2 domain. Residues asparagine 168 and asparagine 169 are each glycosylated (N-linked (GlcNAc...) asparagine). N-linked (GlcNAc...) asparagine; partial glycosylation occurs at asparagine 197. A glycan (N-linked (GlcNAc...) asparagine) is linked at asparagine 204. One can recognise a Cystatin kininogen-type 3 domain in the interval 272-375 (VDSPDLEEPL…TVNCQPLGQT (104 aa)). A Phosphoserine modification is found at serine 331. Residues 396 to 497 (EGSTTVSLPH…GKNNGKHYDW (102 aa)) are disordered. The O-linked (GalNAc...) serine glycan is linked to serine 398. Threonine 399 and threonine 400 each carry an O-linked (GalNAc...) threonine glycan. A glycan (O-linked (GalNAc...) serine) is linked at serine 406. A compositionally biased stretch (basic residues) spans 444 to 492 (GHKHKHDQGHGHHGSHGLGHGHQKQHGLGHGHKHGHGHGKHKNKGKNNG). Residue serine 512 is glycosylated (O-linked (GalNAc...) serine). O-linked (GalNAc...) threonine glycosylation is found at threonine 520, threonine 524, threonine 536, threonine 548, threonine 553, and threonine 570. A glycan (O-linked (GalNAc...) serine) is linked at serine 581.

Bradykinin is released from kininogen by plasma kallikrein. Post-translationally, phosphorylated by FAM20C in the extracellular medium. In terms of processing, bradykinin is inactivated by ACE, which removes the dipeptide Arg-Phe from its C-terminus. Plasma.

The protein localises to the secreted. It localises to the extracellular space. Kininogens are inhibitors of thiol proteases. HMW-kininogen plays an important role in blood coagulation by helping to position optimally prekallikrein and factor XI next to factor XII; HMW-kininogen inhibits the thrombin- and plasmin-induced aggregation of thrombocytes. LMW-kininogen inhibits the aggregation of thrombocytes. LMW-kininogen is in contrast to HMW-kininogen not involved in blood clotting. Functionally, the active peptide bradykinin is a potent vasodilatator that is released from HMW-kininogen shows a variety of physiological effects: (A) influence in smooth muscle contraction, (B) induction of hypotension, (C) natriuresis and diuresis, (D) decrease in blood glucose level, (E) it is a mediator of inflammation and causes (E1) increase in vascular permeability, (E2) stimulation of nociceptors (4E3) release of other mediators of inflammation (e.g. prostaglandins), (F) it has a cardioprotective effect (directly via bradykinin action, indirectly via endothelium-derived relaxing factor action). The protein is Kininogen-1 (KNG1) of Bos taurus (Bovine).